The following is a 568-amino-acid chain: Small ribosomal subunit protein bS1 (568 aa).

S1 motif domains lie at 39–100 (KTVV…LSRE), 118–184 (GEFV…VSRR), 205–273 (GMIL…LGIK), 290–360 (GKKM…LSIK), 377–447 (GTII…LGIK), and 464–533 (GTIV…LSVK).

This sequence belongs to the bacterial ribosomal protein bS1 family.

Functionally, binds mRNA; thus facilitating recognition of the initiation point. It is needed to translate mRNA with a short Shine-Dalgarno (SD) purine-rich sequence. The protein is Small ribosomal subunit protein bS1 (rpsA) of Rickettsia typhi (strain ATCC VR-144 / Wilmington).